Here is a 314-residue protein sequence, read N- to C-terminus: 1,4-dihydroxy-2-naphthoyl-CoA synthase (314 aa).

Residues Arg-58, 103–107, Tyr-115, 157–161, Thr-184, Ser-190, Tyr-287, and Lys-302 contribute to the substrate site; these read SGGDQ and WAAGG.

The protein belongs to the enoyl-CoA hydratase/isomerase family. MenB subfamily.

The catalysed reaction is 2-succinylbenzoyl-CoA + H(+) = 1,4-dihydroxy-2-naphthoyl-CoA + H2O. It participates in quinol/quinone metabolism; 1,4-dihydroxy-2-naphthoate biosynthesis; 1,4-dihydroxy-2-naphthoate from chorismate: step 6/7. Its pathway is quinol/quinone metabolism; menaquinone biosynthesis. In terms of biological role, converts o-succinylbenzoyl-CoA (OSB-CoA) to 1,4-dihydroxy-2-naphthoyl-CoA (DHNA-CoA). The chain is 1,4-dihydroxy-2-naphthoyl-CoA synthase from Mycobacterium tuberculosis (strain CDC 1551 / Oshkosh).